The sequence spans 1121 residues: Potassium channel subfamily U member 1 (1121 aa).

The Extracellular portion of the chain corresponds to 1-24 (MSQTLLDSLNQKELTETSCTIEIQ). The helical transmembrane segment at 25-45 (AAFILSSLATFFGGLIILFLF) threads the bilayer. Residues 46-101 (RIALKSSRSWKYVKGPRGLLELFSSRRIEANPLRKLYFHGVFRQRIEMLLSAQTVV) are Cytoplasmic-facing. A helical transmembrane segment spans residues 102 to 122 (GQVLVILVFVLSIGSLVIYFI). The Extracellular segment spans residues 123-137 (NSMDPVRRCSSYEDK). The chain crosses the membrane as a helical span at residues 138-158 (IVHVDLSFNAFFSFYFGLRFW). The Cytoplasmic portion of the chain corresponds to 159–165 (AAEDKIK). A helical transmembrane segment spans residues 166-186 (FWLEMNSIVDIFTIPPTFISY). Residues 187 to 188 (YL) are Extracellular-facing. The chain crosses the membrane as a helical; Voltage-sensor span at residues 189–209 (KSNWLGLRFLRALRLLELPKI). Residues 210 to 226 (LQILQVIKTSNSVKLSK) lie on the Cytoplasmic side of the membrane. The chain crosses the membrane as a helical span at residues 227-247 (LLSIVISTWFTAAGFLHLVEN). Residues 248–259 (SGDPWLNGRNSQ) are Extracellular-facing. An intramembrane region (pore-forming) is located at residues 260 to 282 (TMSYFESIYLVTATMSTVGFGDV). Positions 276 to 279 (TVGF) match the Selectivity for potassium motif. Topologically, residues 283-290 (VAKTSLGR) are extracellular. The chain crosses the membrane as a helical span at residues 291–311 (IFIVFFTLGSLILFANYIPEM). The Cytoplasmic segment spans residues 312-1121 (VELFSTRKKY…LDASDIVQEK (810 aa)). RCK N-terminal domains are found at residues 331-473 (KKFI…DNIL) and 718-889 (QNHI…DGML). Disordered regions lie at residues 836–858 (SPTP…KERK) and 1052–1076 (DSSP…GSNF).

The protein belongs to the potassium channel family. Calcium-activated (TC 1.A.1.3) subfamily. KCa5.1/KCNU1 sub-subfamily. As to quaternary structure, homotetramer; which constitutes the calcium-activated potassium channel. Interact with LRRC52; this interaction changes some channel gating properties, such as shifting gating to more negative potentials at a given pH. As to expression, testis-specific. Mainly expressed in spermatocytes. In terms of tissue distribution, expressed in testis, brain, eye and kidney.

Its subcellular location is the cell membrane. It localises to the cytoplasm. It carries out the reaction K(+)(in) = K(+)(out). Regulated by changes in cytosolic pH; activated by alkalization. In contrast to human KCNU1 is not activated by Ca(2+) or Mg(2+). The auxiliary subunit LRRC52 shifts the activation of KCNU1 to more negative potentials at a given pH. Its function is as follows. Testis-specific potassium channel activated by both intracellular pH and membrane voltage that mediates export of K(+). Represents the primary spermatozoan K(+) current. The channel underlies a pH-triggered membrane hyperpolarization during the process of sperm capacitation, as sperm encounter the alkaline environment near the ovum in the female reproductive tract, thereby playing an essential for male fertility. This is Potassium channel subfamily U member 1 (Kcnu1) from Mus musculus (Mouse).